The following is a 171-amino-acid chain: Tetratricopeptide repeat protein 9C (171 aa).

3 TPR repeats span residues 8-41 (AQVY…LRGL), 72-107 (THCY…QPDN), and 108-141 (AKAL…QPKD).

It belongs to the TTC9 family.

The protein is Tetratricopeptide repeat protein 9C (Ttc9c) of Mus musculus (Mouse).